The sequence spans 1261 residues: Structural maintenance of chromosomes protein 3 (1261 aa).

Coiled coils occupy residues 188 to 332 (EKIQ…HSLQ) and 406 to 450 (LIAD…YEMD). The SMC hinge domain maps to 534–645 (NGYYGTVIEL…IIVRTLDQAA (112 aa)). 3 coiled-coil regions span residues 677–826 (KRSK…MDLM), 857–930 (NERR…DKIT), and 1023–1085 (RELE…ENRK). Positions 1159–1193 (LSGGQKSLVALAIIFSIQKCDPAPFYLFDEIDAAL) match the DA-box motif.

This sequence belongs to the SMC family. SMC3 subfamily. Component of the cohesin complex, composed of the smc-1 and smc-3 heterodimer attached via their SMC hinge domain, scc-1 which links them, and scc-3. Interacts with scc-1, smc-1 and tim-1.

Its subcellular location is the nucleus. It is found in the chromosome. In terms of biological role, involved in chromosome cohesion during cell cycle and in DNA repair. Involved in the repair of double strand breaks during mitosis and meiosis. Required for chromosome segregation during mitosis. Central component of cohesin complex. The cohesin complex is required for the cohesion of sister chromatids after DNA replication. The cohesin complex apparently forms a large proteinaceous ring within which sister chromatids can be trapped. At anaphase, the complex is cleaved and dissociates from chromatin, allowing sister chromatids to segregate. Required for the localization of lab-1 to meiotic and mitotic chromosomes. The polypeptide is Structural maintenance of chromosomes protein 3 (Caenorhabditis elegans).